The sequence spans 802 residues: Leucine--tRNA ligase (802 aa).

A 'HIGH' region motif is present at residues 40–51; sequence PYPSGAGLHVGH. A 'KMSKS' region motif is present at residues 576-580; it reads KMSKS. Position 579 (Lys579) interacts with ATP.

The protein belongs to the class-I aminoacyl-tRNA synthetase family.

It is found in the cytoplasm. The enzyme catalyses tRNA(Leu) + L-leucine + ATP = L-leucyl-tRNA(Leu) + AMP + diphosphate. This is Leucine--tRNA ligase from Bacillus cytotoxicus (strain DSM 22905 / CIP 110041 / 391-98 / NVH 391-98).